Reading from the N-terminus, the 242-residue chain is Orotidine 5'-phosphate decarboxylase (242 aa).

Substrate is bound by residues Asp16, Lys37, 64–73 (DLKFHDIPNT), Thr128, Arg190, Gln199, Gly219, and Arg220. Residue Lys66 is the Proton donor of the active site.

The protein belongs to the OMP decarboxylase family. Type 1 subfamily. In terms of assembly, homodimer.

The enzyme catalyses orotidine 5'-phosphate + H(+) = UMP + CO2. It participates in pyrimidine metabolism; UMP biosynthesis via de novo pathway; UMP from orotate: step 2/2. Functionally, catalyzes the decarboxylation of orotidine 5'-monophosphate (OMP) to uridine 5'-monophosphate (UMP). This Prochlorococcus marinus (strain MIT 9215) protein is Orotidine 5'-phosphate decarboxylase.